The sequence spans 89 residues: Small ribosomal subunit protein uS17 (89 aa).

Belongs to the universal ribosomal protein uS17 family. As to quaternary structure, part of the 30S ribosomal subunit.

One of the primary rRNA binding proteins, it binds specifically to the 5'-end of 16S ribosomal RNA. The chain is Small ribosomal subunit protein uS17 from Leptospira borgpetersenii serovar Hardjo-bovis (strain JB197).